We begin with the raw amino-acid sequence, 393 residues long: Succinate--CoA ligase [ADP-forming] subunit beta (393 aa).

The ATP-grasp domain occupies 9–251; sequence KALFEKFGVL…LNEEDPKEIE (243 aa). ATP-binding positions include Lys-46, 53–55, Ser-109, and Glu-114; that span reads GRG. Mg(2+)-binding residues include Asn-206 and Asp-220. Residues Asn-271 and 328-330 each bind substrate; that span reads GIM.

The protein belongs to the succinate/malate CoA ligase beta subunit family. In terms of assembly, heterotetramer of two alpha and two beta subunits. It depends on Mg(2+) as a cofactor.

The enzyme catalyses succinate + ATP + CoA = succinyl-CoA + ADP + phosphate. The catalysed reaction is GTP + succinate + CoA = succinyl-CoA + GDP + phosphate. Its pathway is carbohydrate metabolism; tricarboxylic acid cycle; succinate from succinyl-CoA (ligase route): step 1/1. In terms of biological role, succinyl-CoA synthetase functions in the citric acid cycle (TCA), coupling the hydrolysis of succinyl-CoA to the synthesis of either ATP or GTP and thus represents the only step of substrate-level phosphorylation in the TCA. The beta subunit provides nucleotide specificity of the enzyme and binds the substrate succinate, while the binding sites for coenzyme A and phosphate are found in the alpha subunit. In Opitutus terrae (strain DSM 11246 / JCM 15787 / PB90-1), this protein is Succinate--CoA ligase [ADP-forming] subunit beta.